The primary structure comprises 228 residues: Protein CWC15 homolog A (228 aa).

A disordered region spans residues 1 to 126 (MTTAARPTFE…DEDSDDDTAA (126 aa)). The segment covering 24–34 (SQLSKQYSSRD) has biased composition (polar residues). A compositionally biased stretch (basic and acidic residues) spans 52-84 (EEVRSRDFRRELEERERVVARDKNRDRPTREHT). The segment covering 102–124 (DADDPLTDEDGDEDSDEDSDDDT) has biased composition (acidic residues). Positions 121–165 (DDDTAALLAELEKIKKERAEEKDRKELEQKAEEERIRMENILSGN) form a coiled coil.

It belongs to the CWC15 family. As to quaternary structure, identified in the spliceosome C complex. Component of the minor spliceosome, which splices U12-type introns.

It is found in the nucleus. In terms of biological role, involved in pre-mRNA splicing as component of the spliceosome. The polypeptide is Protein CWC15 homolog A (cwc15-a) (Xenopus laevis (African clawed frog)).